The chain runs to 513 residues: Cytochrome P450 monooxygenase asaD (513 aa).

Residues 14–34 form a helical membrane-spanning segment; that stretch reads ILYPFLFGIFAVASLCIATLL. 4 N-linked (GlcNAc...) asparagine glycosylation sites follow: Asn258, Asn370, Asn431, and Asn441. Residue Cys461 coordinates heme.

Belongs to the cytochrome P450 family. Heme serves as cofactor.

The protein resides in the membrane. Its pathway is secondary metabolite biosynthesis. Its function is as follows. Cytochrome P450 monooxygenase; part of the gene cluster that mediates the biosynthesis of aspergillic acid, a hydroxamic acid-containing pyrazinone with aliphatic side chains that originates from leucine (Leu) and isoleucine (Ile). Aspergillic acid has antibiotic properties and was shown to be lethal to mice. The first step in the pathway is the production of deoxyaspergillic acid via a condensation between the Ile amine and the Leu carboxylic acid, followed by a reductive release from the protein forming the dipeptide aldehyde NH(2)-Leu-Ile-CHO, which could undergo an intermolecular cyclization resulting in a dihydropyrazinone. As the NRPS asaC lacks a condensation domain, it is improbable that it is responsible for condensation of Leu and Ile. One possibility is that asaC acts on a previously condensed dipeptide and functions as a Leu-Ile reductase to yield deoxyaspergillic acid. After asaC forms deoxyaspergillic acid, the cytochrome P450 asaD oxidizes the pyrazinone to the hydroxamic acid-containing bioactive metabolite aspergillic acid. The hydroxylase/desaturase asaB can then convert aspergillic acid to hydroxyaspergillic acid. Both aspergillic acid and hydroxyaspergillic acid can form complexes with iron producing ferriaspergillin analogs. The sequence is that of Cytochrome P450 monooxygenase asaD from Aspergillus flavus (strain ATCC 200026 / FGSC A1120 / IAM 13836 / NRRL 3357 / JCM 12722 / SRRC 167).